Reading from the N-terminus, the 396-residue chain is MPEGALRNFTINFGPQHPAAHGVLRLVLELDGEIVERVDPHIGLLHRGTEKLIEAKTYLQAIPYFDRLDYVAPMNQEHAFCLAAEKLLDIAVPRRAQLIRVLYCEIGRILSHLLNVTTQAMDVGALTPPLWGFEEREKLMMFYERASGSRMHAAYFRVGGVHQDLPPKLVDDIEAWCVAFPQVIDDLDRLLTGNRIFKQRNVDIGVVTLAQAWEWGFSGVMVRGSGAAWDLRKSQPYECYAELEFDIPIGKNGDCYDRYCIRMEEMRQSVRIMQQCIAKLRAPDGGGPVAVQDNKIFPPRRGEMKRSMESLIHHFKLYTEGFRVPAGEVYVAVEAPKGEFGVFLVSDGSNKPYKCKIRAPGFAHLQAMDFISRGHLLADVSAILGSLDIVFGEVDR.

Belongs to the complex I 49 kDa subunit family. In terms of assembly, NDH-1 is composed of 14 different subunits. Subunits NuoB, C, D, E, F, and G constitute the peripheral sector of the complex.

It localises to the cell inner membrane. It catalyses the reaction a quinone + NADH + 5 H(+)(in) = a quinol + NAD(+) + 4 H(+)(out). Its function is as follows. NDH-1 shuttles electrons from NADH, via FMN and iron-sulfur (Fe-S) centers, to quinones in the respiratory chain. The immediate electron acceptor for the enzyme in this species is believed to be ubiquinone. Couples the redox reaction to proton translocation (for every two electrons transferred, four hydrogen ions are translocated across the cytoplasmic membrane), and thus conserves the redox energy in a proton gradient. This Rhodopseudomonas palustris (strain BisB18) protein is NADH-quinone oxidoreductase subunit D.